Here is a 373-residue protein sequence, read N- to C-terminus: Tomoregulin-1 (373 aa).

The N-terminal stretch at 1–36 (MGAQAPLRLPAAPPLAVCGYTSVLLLFAFCLPGSGA) is a signal peptide. The Extracellular portion of the chain corresponds to 37–323 (SNQPAGGGGD…VPSRQKLTHV (287 aa)). The N-linked (GlcNAc...) asparagine glycan is linked to asparagine 56. In terms of domain architecture, Kazal-like 1 spans 91–138 (ACQFQCHTNYIPVCGSNGDTYQNECFLRRAACKHQKDITVVARGPCYS). Intrachain disulfides connect cysteine 92-cysteine 122, cysteine 96-cysteine 115, and cysteine 104-cysteine 136. Asparagine 140 is a glycosylation site (N-linked (GlcNAc...) asparagine). The disordered stretch occupies residues 140–162 (NGSGSGEGEEEGSGAGAHRKHSK). One can recognise a Kazal-like 2 domain in the interval 182-230 (VCNIDCSGYSFNPVCASDGSSYNNPCFVREASCIRQEQIDIRHLGHCTD). Intrachain disulfides connect cysteine 183-cysteine 214, cysteine 187-cysteine 207, cysteine 196-cysteine 228, cysteine 268-cysteine 281, cysteine 276-cysteine 292, and cysteine 294-cysteine 303. The EGF-like domain maps to 264 to 304 (SHMPCPENLNGYCIHGKCEFIYSTQKASCRCESGYTGQHCE). The helical transmembrane segment at 324 to 344 (LIAAIIGAVQIAIIVAIVMCI) threads the bilayer. Over 345–373 (TRKCPKNNRGRRQKQNLGHFTSETSSRMV) the chain is Cytoplasmic. Residues 352–373 (NRGRRQKQNLGHFTSETSSRMV) form a disordered region. Residues 359–373 (QNLGHFTSETSSRMV) show a composition bias toward polar residues.

It belongs to the tomoregulin family. In terms of assembly, may interact with ST14.

The protein localises to the cell membrane. In terms of biological role, neuron-specific restriction factor that prevents herpes simplex virus 1 (HHV-1) infection in the brain by blocking viral entry. Also able to restrict herpes simplex virus 2 (HHV-2) infection, although to a lesser extent. Acts by preventing the association between the viral glycoprotein D (gD) and its cell surface receptor NECTIN1, thereby inhibiting fusion of the virus and the cell membrane. Also able to prevent the association between the viral glycoprotein B (gB) and MYH9/NMMHC-IIA and MYH10/NMMHC-IIB receptors. The chain is Tomoregulin-1 (Tmeff1) from Rattus norvegicus (Rat).